The following is a 374-amino-acid chain: Spore germination protein B3 (374 aa).

A signal peptide spans 1–19 (MKTASKFSVMFFMLLALCG). Residue cysteine 20 is the site of N-palmitoyl cysteine attachment. Cysteine 20 carries the S-diacylglycerol cysteine lipid modification.

This sequence belongs to the GerABKC lipoprotein family.

The protein resides in the cell membrane. Functionally, involved in the response to the germinative mixture of L-asparagine, glucose, fructose and potassium ions (AGFK). Cannot stimulate germination in the absence of gerD and gerK gene products (fructose and glucose receptors respectively). This Bacillus subtilis (strain 168) protein is Spore germination protein B3 (gerBC).